The primary structure comprises 328 residues: Ribosomal RNA small subunit methyltransferase C (328 aa).

Belongs to the methyltransferase superfamily. RsmC family. As to quaternary structure, monomer.

The protein localises to the cytoplasm. It catalyses the reaction guanosine(1207) in 16S rRNA + S-adenosyl-L-methionine = N(2)-methylguanosine(1207) in 16S rRNA + S-adenosyl-L-homocysteine + H(+). Its function is as follows. Specifically methylates the guanine in position 1207 of 16S rRNA in the 30S particle. The polypeptide is Ribosomal RNA small subunit methyltransferase C (Pasteurella multocida (strain Pm70)).